Reading from the N-terminus, the 404-residue chain is Argininosuccinate synthase (404 aa).

Residues 12 to 20 (AYSGGLDTS) and Ala39 each bind ATP. Residues Tyr90 and Ser95 each contribute to the L-citrulline site. Gly120 lines the ATP pocket. Residues Thr122, Asn126, and Asp127 each coordinate L-aspartate. Asn126 is a binding site for L-citrulline. Residues Arg130, Ser181, Ser190, Glu266, and Tyr278 each contribute to the L-citrulline site.

Belongs to the argininosuccinate synthase family. Type 1 subfamily. As to quaternary structure, homotetramer.

Its subcellular location is the cytoplasm. It carries out the reaction L-citrulline + L-aspartate + ATP = 2-(N(omega)-L-arginino)succinate + AMP + diphosphate + H(+). The protein operates within amino-acid biosynthesis; L-arginine biosynthesis; L-arginine from L-ornithine and carbamoyl phosphate: step 2/3. This Rhodospirillum rubrum (strain ATCC 11170 / ATH 1.1.1 / DSM 467 / LMG 4362 / NCIMB 8255 / S1) protein is Argininosuccinate synthase.